Here is a 368-residue protein sequence, read N- to C-terminus: MKMQTPKESLSERLSALQDKILDHYENDSKDINSQISYWQLIRLENAILFTAREHGITKLNHQVVPPINISKSKAHKAIELQMALKGLAQSKYNNEEWTLQDTCEELWNTEPSQCFKKGGKTVHVYFDGNKDNCMNYVVWDSIYYITETGIWDKTAACVSYWGVYYIKDGDTTYYVQFKSECEKYGNSNTWEVQYGGNVIDCNDSMCSTSDDTVSATQIVRQLQHASTSTPKTASVGTPKPHIQTPATKRPRQCGLTEQHHGRVNTHVHNPLLCSSTSNNKRRKVCSGNTTPIIHLKGDKNSLKCLRYRLRKYADHYSEISSTWHWTGCNKNTGILTVTYNSEVQRNTFLDVVTIPNSVQISVGYMTI.

The segment at 1 to 207 (MKMQTPKESL…NVIDCNDSMC (207 aa)) is transactivation domain. Over residues 227-236 (STSTPKTASV) the composition is skewed to polar residues. Positions 227–251 (STSTPKTASVGTPKPHIQTPATKRP) are disordered. Residues 290 to 368 (TTPIIHLKGD…VQISVGYMTI (79 aa)) form a DNA-binding domain region. K297 participates in a covalent cross-link: Glycyl lysine isopeptide (Lys-Gly) (interchain with G-Cter in SUMO).

Belongs to the papillomaviridae E2 protein family. In terms of assembly, binds DNA as homodimer. Interacts with protein E1; this interaction greatly increases E1 DNA-binding activity. Interacts with protein L1; this interaction enhances E2-dependent replication and transcription activation. Interacts with protein L2; this interaction inhibits E2 transcriptional activity but not DNA replication function E2. Interacts with protein E7; this interaction inhibits E7 oncogenic activity. Interacts with host TAF1; this interaction modulates E2-dependent transcriptional regulation. Interacts with host BRD4; this interaction mediates E2 transcriptional activation function. Additionally, the interaction with host BRD4 on mitotic chromosomes mediates tethering of the viral genome. Interacts with host TOPBP1; this interaction is required for optimal viral DNA replication. Post-translationally, phosphorylated. Sumoylation plays a regulatory role in E2 transcriptional activity.

Its subcellular location is the host nucleus. Its function is as follows. Plays a role in the initiation of viral DNA replication. A dimer of E2 interacts with a dimer of E1 in order to improve specificity of E1 DNA binding activity. Once the complex recognizes and binds DNA at specific sites, the E2 dimer is removed from DNA. E2 also regulates viral transcription through binding to the E2RE response element (5'-ACCNNNNNNGGT-3') present in multiple copies in the regulatory regions of the viral genome. Activates or represses transcription depending on E2RE's position with regards to proximal promoter elements including the TATA-box. Repression occurs by sterically hindering the assembly of the transcription initiation complex. This Human papillomavirus 45 protein is Regulatory protein E2.